A 206-amino-acid polypeptide reads, in one-letter code: Phosphoribosylglycinamide formyltransferase (206 aa).

Residue 13 to 15 coordinates N(1)-(5-phospho-beta-D-ribosyl)glycinamide; the sequence is GTN. Residues 99-102 and Asn-121 each bind (6R)-10-formyltetrahydrofolate; that span reads MIIL. His-123 acts as the Proton donor in catalysis. A (6R)-10-formyltetrahydrofolate-binding site is contributed by Asp-163. Position 192 (Glu-192) interacts with N(1)-(5-phospho-beta-D-ribosyl)glycinamide.

The protein belongs to the GART family.

It carries out the reaction N(1)-(5-phospho-beta-D-ribosyl)glycinamide + (6R)-10-formyltetrahydrofolate = N(2)-formyl-N(1)-(5-phospho-beta-D-ribosyl)glycinamide + (6S)-5,6,7,8-tetrahydrofolate + H(+). The protein operates within purine metabolism; IMP biosynthesis via de novo pathway; N(2)-formyl-N(1)-(5-phospho-D-ribosyl)glycinamide from N(1)-(5-phospho-D-ribosyl)glycinamide (10-formyl THF route): step 1/1. The polypeptide is Phosphoribosylglycinamide formyltransferase (purN) (Dictyostelium discoideum (Social amoeba)).